The sequence spans 236 residues: Leucyl/phenylalanyl-tRNA--protein transferase (236 aa).

Belongs to the L/F-transferase family.

Its subcellular location is the cytoplasm. The catalysed reaction is N-terminal L-lysyl-[protein] + L-leucyl-tRNA(Leu) = N-terminal L-leucyl-L-lysyl-[protein] + tRNA(Leu) + H(+). It catalyses the reaction N-terminal L-arginyl-[protein] + L-leucyl-tRNA(Leu) = N-terminal L-leucyl-L-arginyl-[protein] + tRNA(Leu) + H(+). It carries out the reaction L-phenylalanyl-tRNA(Phe) + an N-terminal L-alpha-aminoacyl-[protein] = an N-terminal L-phenylalanyl-L-alpha-aminoacyl-[protein] + tRNA(Phe). Functionally, functions in the N-end rule pathway of protein degradation where it conjugates Leu, Phe and, less efficiently, Met from aminoacyl-tRNAs to the N-termini of proteins containing an N-terminal arginine or lysine. This chain is Leucyl/phenylalanyl-tRNA--protein transferase, found in Yersinia enterocolitica serotype O:8 / biotype 1B (strain NCTC 13174 / 8081).